A 659-amino-acid polypeptide reads, in one-letter code: Acetyl-coenzyme A synthetase (659 aa).

The tract at residues 1–35 is disordered; the sequence is MATEQTKGQSSESISSVLSERRKFPPPEAFSSQSH. CoA is bound by residues 205-208, T323, and N347; that span reads RRGS. ATP contacts are provided by residues 399–401, 423–428, D512, and R527; these read GEP and DTWWQT. S535 is a CoA binding site. R538 serves as a coordination point for ATP. 3 residues coordinate Mg(2+): V549, H551, and V554. N6-acetyllysine is present on K621.

This sequence belongs to the ATP-dependent AMP-binding enzyme family. Mg(2+) serves as cofactor. Post-translationally, acetylated. Deacetylation by the SIR2-homolog deacetylase activates the enzyme.

It carries out the reaction acetate + ATP + CoA = acetyl-CoA + AMP + diphosphate. Its function is as follows. Catalyzes the conversion of acetate into acetyl-CoA (AcCoA), an essential intermediate at the junction of anabolic and catabolic pathways. AcsA undergoes a two-step reaction. In the first half reaction, AcsA combines acetate with ATP to form acetyl-adenylate (AcAMP) intermediate. In the second half reaction, it can then transfer the acetyl group from AcAMP to the sulfhydryl group of CoA, forming the product AcCoA. In Chlorobaculum tepidum (strain ATCC 49652 / DSM 12025 / NBRC 103806 / TLS) (Chlorobium tepidum), this protein is Acetyl-coenzyme A synthetase.